The following is a 668-amino-acid chain: Fe(2+) transporter FeoB (668 aa).

Positions 3 to 165 (SYEIALIGNP…KKAISIAVKD (163 aa)) constitute a FeoB-type G domain. 10–17 (GNPNVGKS) contributes to the GTP binding site. Positions 21, 22, 24, and 25 each coordinate Mg(2+). GTP contacts are provided by residues 35-39 (GVTVE), 56-59 (DLPG), 116-119 (NKMD), and 145-147 (SAA). 8 consecutive transmembrane segments (helical) span residues 344 to 364 (VGAV…ISFL), 386 to 406 (LPGK…PAIM), 418 to 438 (ILTI…IYAL), 450 to 470 (VVIL…AFLF), 515 to 535 (IIVF…SGYL), 574 to 594 (ALVF…MLYG), 613 to 633 (AYAF…LAVI), and 643 to 663 (LFAV…ISVI).

It belongs to the TRAFAC class TrmE-Era-EngA-EngB-Septin-like GTPase superfamily. FeoB GTPase (TC 9.A.8) family. In terms of assembly, the crystallized N-terminal domain is a homodimer.

Its subcellular location is the cell membrane. Probable transporter of a GTP-driven Fe(2+) uptake system, might be able to transport Fe(2+) into or out of the cell. The chain is Fe(2+) transporter FeoB from Methanocaldococcus jannaschii (strain ATCC 43067 / DSM 2661 / JAL-1 / JCM 10045 / NBRC 100440) (Methanococcus jannaschii).